Consider the following 390-residue polypeptide: Homeobox protein Hox-B2a (390 aa).

Disordered regions lie at residues 40–73 (STAIPPPFEHTIPSLSPCTGNQARPRSQKRTASN), 81–100 (TAPPTQHQQGPAPLSGGAPL), 108–155 (KEKK…LDNV), and 211–338 (MKHK…SLPD). Positions 52-73 (PSLSPCTGNQARPRSQKRTASN) are enriched in polar residues. Residues 103–108 (EFPWMK) carry the Antp-type hexapeptide motif. A compositionally biased stretch (low complexity) spans 118–135 (KPGATAAAAAASPSQASS). Positions 158 to 217 (SRRLRTAYTNTQLLELEKEFHFNKYLCRPRRVEIAALLDLTERQVKVWFQNRRMKHKRQT) form a DNA-binding region, homeobox. Over residues 244–262 (SSQSLEVSGSGSAAPSESE) the composition is skewed to low complexity. The segment covering 263 to 290 (TCPTTAAYTNSSDKSQPTPEEGQASQPE) has biased composition (polar residues).

It belongs to the Antp homeobox family. Proboscipedia subfamily.

The protein localises to the nucleus. In terms of biological role, sequence-specific transcription factor which is part of a developmental regulatory system that provides cells with specific positional identities on the anterior-posterior axis. Plays an important role in the patterning of hindbrain and pharyngeal arches. This is Homeobox protein Hox-B2a (hoxb2a) from Danio rerio (Zebrafish).